The sequence spans 291 residues: ATP synthase subunit a (291 aa).

Transmembrane regions (helical) follow at residues 50 to 70 (LDSM…FWIV), 108 to 128 (IAPL…MDLI), 129 to 149 (PVDW…GMDP), 161 to 181 (DPNI…FYSI), 203 to 223 (PVAK…TFLA), 241 to 261 (LIFI…SVPW), and 262 to 282 (AIFH…LTIV).

This sequence belongs to the ATPase A chain family. F-type ATPases have 2 components, CF(1) - the catalytic core - and CF(0) - the membrane proton channel. CF(1) has five subunits: alpha(3), beta(3), gamma(1), delta(1), epsilon(1). CF(0) has three main subunits: a(1), b(2) and c(9-12). The alpha and beta chains form an alternating ring which encloses part of the gamma chain. CF(1) is attached to CF(0) by a central stalk formed by the gamma and epsilon chains, while a peripheral stalk is formed by the delta and b chains.

Its subcellular location is the cell inner membrane. Key component of the proton channel; it plays a direct role in the translocation of protons across the membrane. This is ATP synthase subunit a from Acinetobacter baumannii (strain AB307-0294).